The chain runs to 398 residues: UPF0229 protein Ccel_0490 (398 aa).

Disordered regions lie at residues 1–22 and 68–104; these read MAIF…RRRH and KSKP…NSEG. Basic and acidic residues-rich tracts occupy residues 11 to 22 and 78 to 95; these read GKDRSAEDRRRH and GNEK…EGKG.

It belongs to the UPF0229 family.

The chain is UPF0229 protein Ccel_0490 from Ruminiclostridium cellulolyticum (strain ATCC 35319 / DSM 5812 / JCM 6584 / H10) (Clostridium cellulolyticum).